The following is a 253-amino-acid chain: MDSVRPRAPWAPPPDPASLDSPTCEPGLMAGTQLFRFREEPVPGGNRAVLEVRVPQVLHVQYGMYVWPCAVVLAQYLWFHRRSLPGKAVLEVGAGVSLPGILAAKCGAKVILSDSSEFPHCLDICRQSCQMNNLPQVEVVGLTWGHISKDILSLPPQDIILGSDVFFEPEDFESILATVYFLMQKNPKVQFWSTYQVRSADWSLEGLLYKWDMKCVHIPLESFDADKEDIAESTLPGRHTVEMLIISFAKDSF.

Residues 1–23 (MDSVRPRAPWAPPPDPASLDSPT) are disordered.

The protein belongs to the methyltransferase superfamily. METTL23 family. In terms of assembly, interacts with HSPA5, HSP90B1, TUBULIN, UGGT1 and UGGT2. Interacts with TET3. Interacts with STPG4. In terms of tissue distribution, ubiquitously expressed.

It is found in the nucleus. The protein resides in the cytoplasm. The enzyme catalyses L-arginyl-[protein] + 2 S-adenosyl-L-methionine = N(omega),N(omega)-dimethyl-L-arginyl-[protein] + 2 S-adenosyl-L-homocysteine + 2 H(+). In terms of biological role, histone methyltransferase that dimethylates histone H3 at 'Arg-17', forming asymmetric dimethylarginine (H3R17me2a), leading to activate transcription via chromatin remodeling. Maternal factor involved in epigenetic chromatin reprogramming of the paternal genome in the zygote: mediates H3R17me2a, promoting histone H3.3 incorporation in the male pronucleus, leading to TET3 recruitment and subsequent DNA demethylation. The chain is Histone-arginine methyltransferase METTL23 from Mus musculus (Mouse).